Consider the following 131-residue polypeptide: S-adenosylmethionine decarboxylase proenzyme (131 aa).

Catalysis depends on serine 64, which acts as the Schiff-base intermediate with substrate; via pyruvic acid. Serine 64 is modified (pyruvic acid (Ser); by autocatalysis). Histidine 69 acts as the Proton acceptor; for processing activity in catalysis. The active-site Proton donor; for catalytic activity is cysteine 84.

This sequence belongs to the prokaryotic AdoMetDC family. Type 1 subfamily. In terms of assembly, heterotetramer of two alpha and two beta chains arranged as a dimer of alpha/beta heterodimers. The cofactor is pyruvate. Is synthesized initially as an inactive proenzyme. Formation of the active enzyme involves a self-maturation process in which the active site pyruvoyl group is generated from an internal serine residue via an autocatalytic post-translational modification. Two non-identical subunits are generated from the proenzyme in this reaction, and the pyruvate is formed at the N-terminus of the alpha chain, which is derived from the carboxyl end of the proenzyme. The post-translation cleavage follows an unusual pathway, termed non-hydrolytic serinolysis, in which the side chain hydroxyl group of the serine supplies its oxygen atom to form the C-terminus of the beta chain, while the remainder of the serine residue undergoes an oxidative deamination to produce ammonia and the pyruvoyl group blocking the N-terminus of the alpha chain.

The enzyme catalyses S-adenosyl-L-methionine + H(+) = S-adenosyl 3-(methylsulfanyl)propylamine + CO2. Its pathway is amine and polyamine biosynthesis; S-adenosylmethioninamine biosynthesis; S-adenosylmethioninamine from S-adenosyl-L-methionine: step 1/1. Catalyzes the decarboxylation of S-adenosylmethionine to S-adenosylmethioninamine (dcAdoMet), the propylamine donor required for the synthesis of the polyamines spermine and spermidine from the diamine putrescine. The protein is S-adenosylmethionine decarboxylase proenzyme of Thermoplasma acidophilum (strain ATCC 25905 / DSM 1728 / JCM 9062 / NBRC 15155 / AMRC-C165).